Reading from the N-terminus, the 546-residue chain is G1/S-specific cyclin CLN1 (546 aa).

Residues 224-265 (SNGKEWSCKRKSQSSDDSDATVEEHISSSPQSTGLDGDTTTM) are disordered.

Belongs to the cyclin family.

Essential for the control of the cell cycle at the G1/S (start) transition. Interacts with the CDC28 protein kinase to form MPF. This Saccharomyces cerevisiae (strain ATCC 204508 / S288c) (Baker's yeast) protein is G1/S-specific cyclin CLN1 (CLN1).